The chain runs to 126 residues: Protein ApaG (126 aa).

One can recognise an ApaG domain in the interval 2–126 (RRKPYELKVE…FSLAIPRRLH (125 aa)).

This Methylococcus capsulatus (strain ATCC 33009 / NCIMB 11132 / Bath) protein is Protein ApaG.